We begin with the raw amino-acid sequence, 276 residues long: 4-hydroxy-3-methylbut-2-enyl diphosphate reductase (276 aa).

Residue Cys-12 participates in [4Fe-4S] cluster binding. Residues His-36 and His-70 each coordinate (2E)-4-hydroxy-3-methylbut-2-enyl diphosphate. Residues His-36 and His-70 each coordinate dimethylallyl diphosphate. Isopentenyl diphosphate contacts are provided by His-36 and His-70. Cys-92 serves as a coordination point for [4Fe-4S] cluster. Residue His-120 coordinates (2E)-4-hydroxy-3-methylbut-2-enyl diphosphate. Residue His-120 participates in dimethylallyl diphosphate binding. His-120 provides a ligand contact to isopentenyl diphosphate. Glu-122 serves as the catalytic Proton donor. (2E)-4-hydroxy-3-methylbut-2-enyl diphosphate is bound at residue Thr-158. Residue Cys-186 coordinates [4Fe-4S] cluster. (2E)-4-hydroxy-3-methylbut-2-enyl diphosphate contacts are provided by Ser-214, Ser-215, Asn-216, and Ser-258. Dimethylallyl diphosphate is bound by residues Ser-214, Ser-215, Asn-216, and Ser-258. Residues Ser-214, Ser-215, Asn-216, and Ser-258 each coordinate isopentenyl diphosphate.

Belongs to the IspH family. [4Fe-4S] cluster serves as cofactor.

It catalyses the reaction isopentenyl diphosphate + 2 oxidized [2Fe-2S]-[ferredoxin] + H2O = (2E)-4-hydroxy-3-methylbut-2-enyl diphosphate + 2 reduced [2Fe-2S]-[ferredoxin] + 2 H(+). It carries out the reaction dimethylallyl diphosphate + 2 oxidized [2Fe-2S]-[ferredoxin] + H2O = (2E)-4-hydroxy-3-methylbut-2-enyl diphosphate + 2 reduced [2Fe-2S]-[ferredoxin] + 2 H(+). It participates in isoprenoid biosynthesis; dimethylallyl diphosphate biosynthesis; dimethylallyl diphosphate from (2E)-4-hydroxy-3-methylbutenyl diphosphate: step 1/1. The protein operates within isoprenoid biosynthesis; isopentenyl diphosphate biosynthesis via DXP pathway; isopentenyl diphosphate from 1-deoxy-D-xylulose 5-phosphate: step 6/6. Functionally, catalyzes the conversion of 1-hydroxy-2-methyl-2-(E)-butenyl 4-diphosphate (HMBPP) into a mixture of isopentenyl diphosphate (IPP) and dimethylallyl diphosphate (DMAPP). Acts in the terminal step of the DOXP/MEP pathway for isoprenoid precursor biosynthesis. The polypeptide is 4-hydroxy-3-methylbut-2-enyl diphosphate reductase (Wolinella succinogenes (strain ATCC 29543 / DSM 1740 / CCUG 13145 / JCM 31913 / LMG 7466 / NCTC 11488 / FDC 602W) (Vibrio succinogenes)).